A 385-amino-acid chain; its full sequence is 8-amino-7-oxononanoate synthase (385 aa).

Arg21 contributes to the substrate binding site. Position 108-109 (Gly108–Phe109) interacts with pyridoxal 5'-phosphate. His133 is a substrate binding site. Positions 179, 207, and 233 each coordinate pyridoxal 5'-phosphate. Lys236 carries the N6-(pyridoxal phosphate)lysine modification. Residue Thr352 participates in substrate binding.

The protein belongs to the class-II pyridoxal-phosphate-dependent aminotransferase family. BioF subfamily. In terms of assembly, homodimer. Pyridoxal 5'-phosphate is required as a cofactor.

The catalysed reaction is 6-carboxyhexanoyl-[ACP] + L-alanine + H(+) = (8S)-8-amino-7-oxononanoate + holo-[ACP] + CO2. It functions in the pathway cofactor biosynthesis; biotin biosynthesis. Its function is as follows. Catalyzes the decarboxylative condensation of pimeloyl-[acyl-carrier protein] and L-alanine to produce 8-amino-7-oxononanoate (AON), [acyl-carrier protein], and carbon dioxide. This chain is 8-amino-7-oxononanoate synthase, found in Salmonella paratyphi C (strain RKS4594).